A 590-amino-acid polypeptide reads, in one-letter code: Glutamine--fructose-6-phosphate aminotransferase [isomerizing] (590 aa).

The active-site Nucleophile; for GATase activity is Cys2. In terms of domain architecture, Glutamine amidotransferase type-2 spans 2-219; that stretch reads CGIVACILKD…DGEMVILDGD (218 aa). SIS domains follow at residues 277-415 and 438-580; these read VVEE…PELM and LAAT…PDKP. Lys585 serves as the catalytic For Fru-6P isomerization activity.

As to quaternary structure, homodimer.

It localises to the cytoplasm. It catalyses the reaction D-fructose 6-phosphate + L-glutamine = D-glucosamine 6-phosphate + L-glutamate. Catalyzes the first step in hexosamine metabolism, converting fructose-6P into glucosamine-6P using glutamine as a nitrogen source. This is Glutamine--fructose-6-phosphate aminotransferase [isomerizing] from Methanothermobacter thermautotrophicus (strain ATCC 29096 / DSM 1053 / JCM 10044 / NBRC 100330 / Delta H) (Methanobacterium thermoautotrophicum).